The primary structure comprises 357 residues: Ribosomal RNA large subunit methyltransferase M (357 aa).

S-adenosyl-L-methionine contacts are provided by residues Ser-183, 216–219 (APGG), Asp-235, Asp-255, and Asp-271. The active-site Proton acceptor is Lys-300.

Belongs to the class I-like SAM-binding methyltransferase superfamily. RNA methyltransferase RlmE family. RlmM subfamily. As to quaternary structure, monomer.

Its subcellular location is the cytoplasm. It catalyses the reaction cytidine(2498) in 23S rRNA + S-adenosyl-L-methionine = 2'-O-methylcytidine(2498) in 23S rRNA + S-adenosyl-L-homocysteine + H(+). In terms of biological role, catalyzes the 2'-O-methylation at nucleotide C2498 in 23S rRNA. In Pseudomonas fluorescens (strain ATCC BAA-477 / NRRL B-23932 / Pf-5), this protein is Ribosomal RNA large subunit methyltransferase M.